The following is a 456-amino-acid chain: Exodeoxyribonuclease 7 large subunit (456 aa).

The binds ssDNA, also required to bind the small subunit stretch occupies residues 1–103 (MLPSQSPAIF…DYQIIVESMQ (103 aa)).

Belongs to the XseA family. As to quaternary structure, heterooligomer composed of two different subunits with an approximate ratio of 4:1 for small to large subunit. Also estimated to have a 6:1 ration for small to large subunits. Does not require a metal cofactor. is required as a cofactor.

The protein localises to the cytoplasm. It carries out the reaction Exonucleolytic cleavage in either 5'- to 3'- or 3'- to 5'-direction to yield nucleoside 5'-phosphates.. Its function is as follows. Bidirectionally degrades single-stranded DNA into large acid-insoluble oligonucleotides, which are then degraded further into small acid-soluble oligonucleotides. It can degrade 3' or 5' ss regions extending from the termini of duplex DNA molecules and displaced ss regions. It can also excise thymine dimers in vitro. ssDNA-binding requires both subunits. Required for production of the mature 5'-end of retron Ec78 or Ec83 msDNA. Overproduction of this subunit in the absence of an equivalent quantity of the small subunit is toxic, causing cell elongation and chromosome fragmentation or loss; its toxicity is mostly suppressed by RecA. The polypeptide is Exodeoxyribonuclease 7 large subunit (Escherichia coli (strain K12)).